The primary structure comprises 851 residues: DNA mismatch repair protein MutS (851 aa).

Residue 602–609 (GPNMSGKS) coordinates ATP.

This sequence belongs to the DNA mismatch repair MutS family.

Functionally, this protein is involved in the repair of mismatches in DNA. It is possible that it carries out the mismatch recognition step. This protein has a weak ATPase activity. The sequence is that of DNA mismatch repair protein MutS from Streptococcus pyogenes serotype M28 (strain MGAS6180).